The sequence spans 345 residues: S-adenosylmethionine:tRNA ribosyltransferase-isomerase (345 aa).

The protein belongs to the QueA family. In terms of assembly, monomer.

The protein resides in the cytoplasm. It carries out the reaction 7-aminomethyl-7-carbaguanosine(34) in tRNA + S-adenosyl-L-methionine = epoxyqueuosine(34) in tRNA + adenine + L-methionine + 2 H(+). The protein operates within tRNA modification; tRNA-queuosine biosynthesis. In terms of biological role, transfers and isomerizes the ribose moiety from AdoMet to the 7-aminomethyl group of 7-deazaguanine (preQ1-tRNA) to give epoxyqueuosine (oQ-tRNA). This chain is S-adenosylmethionine:tRNA ribosyltransferase-isomerase, found in Helicobacter pylori (strain P12).